The primary structure comprises 485 residues: tRNA sulfurtransferase (485 aa).

The region spanning E61–R165 is the THUMP domain. ATP is bound by residues L183 to I184, K265, G287, and Q296. C344 and C456 are joined by a disulfide. One can recognise a Rhodanese domain in the interval L404 to K483. The active-site Cysteine persulfide intermediate is C456.

This sequence belongs to the ThiI family.

It is found in the cytoplasm. The catalysed reaction is [ThiI sulfur-carrier protein]-S-sulfanyl-L-cysteine + a uridine in tRNA + 2 reduced [2Fe-2S]-[ferredoxin] + ATP + H(+) = [ThiI sulfur-carrier protein]-L-cysteine + a 4-thiouridine in tRNA + 2 oxidized [2Fe-2S]-[ferredoxin] + AMP + diphosphate. It carries out the reaction [ThiS sulfur-carrier protein]-C-terminal Gly-Gly-AMP + S-sulfanyl-L-cysteinyl-[cysteine desulfurase] + AH2 = [ThiS sulfur-carrier protein]-C-terminal-Gly-aminoethanethioate + L-cysteinyl-[cysteine desulfurase] + A + AMP + 2 H(+). It functions in the pathway cofactor biosynthesis; thiamine diphosphate biosynthesis. Catalyzes the ATP-dependent transfer of a sulfur to tRNA to produce 4-thiouridine in position 8 of tRNAs, which functions as a near-UV photosensor. Also catalyzes the transfer of sulfur to the sulfur carrier protein ThiS, forming ThiS-thiocarboxylate. This is a step in the synthesis of thiazole, in the thiamine biosynthesis pathway. The sulfur is donated as persulfide by IscS. The chain is tRNA sulfurtransferase from Haemophilus influenzae (strain PittEE).